The chain runs to 38 residues: Photosystem II reaction center protein L (38 aa).

Residues 17–37 traverse the membrane as a helical segment; it reads SLYWGLLLIFVLAVLFSSYIF.

Belongs to the PsbL family. As to quaternary structure, PSII is composed of 1 copy each of membrane proteins PsbA, PsbB, PsbC, PsbD, PsbE, PsbF, PsbH, PsbI, PsbJ, PsbK, PsbL, PsbM, PsbT, PsbX, PsbY, PsbZ, Psb30/Ycf12, at least 3 peripheral proteins of the oxygen-evolving complex and a large number of cofactors. It forms dimeric complexes.

Its subcellular location is the plastid. It localises to the chloroplast thylakoid membrane. Functionally, one of the components of the core complex of photosystem II (PSII). PSII is a light-driven water:plastoquinone oxidoreductase that uses light energy to abstract electrons from H(2)O, generating O(2) and a proton gradient subsequently used for ATP formation. It consists of a core antenna complex that captures photons, and an electron transfer chain that converts photonic excitation into a charge separation. This subunit is found at the monomer-monomer interface and is required for correct PSII assembly and/or dimerization. This is Photosystem II reaction center protein L from Ostreococcus tauri.